We begin with the raw amino-acid sequence, 89 residues long: Tuberculin-active protein (89 aa).

C27 and C59 are joined by a disulfide. Positions 61–89 are disordered; sequence DGGSESEGKNGSQMRLIADVGPESATVAK.

Tuberculin is the soluble, proteinaceous cell substance of the bacterium, to which infected animals become hypersensitive and react characteristically to dermal injections. The polypeptide is Tuberculin-active protein (Mycobacterium tuberculosis).